Reading from the N-terminus, the 360-residue chain is Ethanolamine-phosphate cytidylyltransferase (360 aa).

CTP-binding positions include 207-208 (GF), 215-218 (HTEA), Lys243, 291-294 (HGDD), and 321-325 (HTEGL).

This sequence belongs to the cytidylyltransferase family.

The enzyme catalyses phosphoethanolamine + CTP + H(+) = CDP-ethanolamine + diphosphate. It participates in phospholipid metabolism; phosphatidylethanolamine biosynthesis; phosphatidylethanolamine from ethanolamine: step 2/3. In terms of biological role, ethanolamine-phosphate cytidylyltransferase that catalyzes the second step in the synthesis of phosphatidylethanolamine (PE) from ethanolamine via the CDP-ethanolamine pathway. The chain is Ethanolamine-phosphate cytidylyltransferase (pctA) from Dictyostelium discoideum (Social amoeba).